Reading from the N-terminus, the 95-residue chain is Aspartyl/glutamyl-tRNA(Asn/Gln) amidotransferase subunit C (95 aa).

This sequence belongs to the GatC family. In terms of assembly, heterotrimer of A, B and C subunits.

It catalyses the reaction L-glutamyl-tRNA(Gln) + L-glutamine + ATP + H2O = L-glutaminyl-tRNA(Gln) + L-glutamate + ADP + phosphate + H(+). It carries out the reaction L-aspartyl-tRNA(Asn) + L-glutamine + ATP + H2O = L-asparaginyl-tRNA(Asn) + L-glutamate + ADP + phosphate + 2 H(+). In terms of biological role, allows the formation of correctly charged Asn-tRNA(Asn) or Gln-tRNA(Gln) through the transamidation of misacylated Asp-tRNA(Asn) or Glu-tRNA(Gln) in organisms which lack either or both of asparaginyl-tRNA or glutaminyl-tRNA synthetases. The reaction takes place in the presence of glutamine and ATP through an activated phospho-Asp-tRNA(Asn) or phospho-Glu-tRNA(Gln). The chain is Aspartyl/glutamyl-tRNA(Asn/Gln) amidotransferase subunit C from Rhizorhabdus wittichii (strain DSM 6014 / CCUG 31198 / JCM 15750 / NBRC 105917 / EY 4224 / RW1) (Sphingomonas wittichii).